A 172-amino-acid polypeptide reads, in one-letter code: Large ribosomal subunit protein uL10 (172 aa).

The protein belongs to the universal ribosomal protein uL10 family. As to quaternary structure, part of the ribosomal stalk of the 50S ribosomal subunit. The N-terminus interacts with L11 and the large rRNA to form the base of the stalk. The C-terminus forms an elongated spine to which L12 dimers bind in a sequential fashion forming a multimeric L10(L12)X complex.

Its function is as follows. Forms part of the ribosomal stalk, playing a central role in the interaction of the ribosome with GTP-bound translation factors. This Chlorobium phaeobacteroides (strain DSM 266 / SMG 266 / 2430) protein is Large ribosomal subunit protein uL10.